The following is a 224-amino-acid chain: uncharacterized protein (224 aa).

This is an uncharacterized protein from Methanocaldococcus jannaschii (strain ATCC 43067 / DSM 2661 / JAL-1 / JCM 10045 / NBRC 100440) (Methanococcus jannaschii).